The sequence spans 199 residues: Chromophore lyase CpcT/CpeT (199 aa).

It belongs to the CpcT/CpeT biliprotein lyase family.

Its function is as follows. Covalently attaches a chromophore to Cys residue(s) of phycobiliproteins. The sequence is that of Chromophore lyase CpcT/CpeT from Prochlorococcus marinus (strain NATL1A).